A 228-amino-acid polypeptide reads, in one-letter code: UPF0173 metal-dependent hydrolase lwe1590 (228 aa).

This sequence belongs to the UPF0173 family.

This chain is UPF0173 metal-dependent hydrolase lwe1590, found in Listeria welshimeri serovar 6b (strain ATCC 35897 / DSM 20650 / CCUG 15529 / CIP 8149 / NCTC 11857 / SLCC 5334 / V8).